The following is a 662-amino-acid chain: Zinc finger protein 800 (662 aa).

Residues 69 to 91 (FECKLCRSLFRGLPNLITHKKFY) form a C2H2-type 1; degenerate zinc finger. Lys-132 is covalently cross-linked (Glycyl lysine isopeptide (Lys-Gly) (interchain with G-Cter in SUMO2)). 2 disordered regions span residues 172 to 197 (ETSSEQLKAVPDADTEVEEAIEPPSI) and 205 to 224 (AAPTEEQPQESQADLETSDS). Residues 205–216 (AAPTEEQPQESQ) show a composition bias toward low complexity. The C2H2-type 2 zinc-finger motif lies at 231-254 (LICCLCRKEFNSRRGVRRHIRKVH). Lys-280 is covalently cross-linked (Glycyl lysine isopeptide (Lys-Gly) (interchain with G-Cter in SUMO2)). Residues 288–311 (RSCPVCCKSFATKANVRRHFDEVH) form a C2H2-type 3 zinc finger. At Ser-318 the chain carries Phosphoserine. The segment at 319 to 349 (ITPDIATKPGQPLFLDSASPKKSFKTRKQKS) is disordered. Thr-320 carries the post-translational modification Phosphothreonine. Position 337 is a phosphoserine (Ser-337). The segment covering 340 to 349 (KSFKTRKQKS) has biased composition (basic residues). The segment at 357–382 (TACKCLLCKRKYSSQIMLKRHMQIVH) adopts a C2H2-type 4 zinc-finger fold. The disordered stretch occupies residues 389-473 (ANSKREKGPN…AGGQQKTRKP (85 aa)). Residue Lys-392 forms a Glycyl lysine isopeptide (Lys-Gly) (interchain with G-Cter in SUMO2) linkage. The segment covering 414-434 (VESSPPSITHSPQNELKGTNH) has biased composition (polar residues). A phosphoserine mark is found at Ser-420, Ser-424, Ser-453, Ser-455, Ser-458, and Ser-460. Low complexity predominate over residues 456–468 (PKSASPSAAGGQQ). Lys-474 participates in a covalent cross-link: Glycyl lysine isopeptide (Lys-Gly) (interchain with G-Cter in SUMO2). C2H2-type zinc fingers lie at residues 484–506 (LYCKLCKRQFTSKQNLTKHIELH) and 517–540 (YKCPLCTYETRRKRDVIRHITVVH). Disordered stretches follow at residues 573–597 (RGPSREEAKHNDSKQDGTSNSPSKK) and 633–662 (HHKKTHKANATNSPEGNKTKGRSTRSKALV). Residues 575–587 (PSREEAKHNDSKQ) show a composition bias toward basic and acidic residues. Lys-597 participates in a covalent cross-link: Glycyl lysine isopeptide (Lys-Gly) (interchain with G-Cter in SUMO2). A C2H2-type 7 zinc finger spans residues 616–638 (HRCNKCGKAFAKKTYLEHHKKTH). The segment covering 651 to 662 (TKGRSTRSKALV) has biased composition (basic residues).

This sequence belongs to the krueppel C2H2-type zinc-finger protein family.

It localises to the nucleus. Functionally, may be involved in transcriptional regulation. This chain is Zinc finger protein 800 (Znf800), found in Mus musculus (Mouse).